The primary structure comprises 300 residues: Folate-binding protein 1 (300 aa).

A signal peptide spans 1–28 (MGRCLTKKVFLIQSPILFLHLLISLSSG). 5 cysteine pairs are disulfide-bonded: Cys38/Cys76, Cys68/Cys111, Cys77/Cys114, Cys102/Cys139, and Cys132/Cys178. N-linked (GlcNAc...) asparagine glycosylation occurs at Asn173. Residues 238–258 (MTTIQKISLGMSFLIAGMFLI) form a helical membrane-spanning segment.

The protein belongs to the folate receptor family. In terms of tissue distribution, expressed in leaves.

It is found in the membrane. Its function is as follows. Folic acid-binding protein involved in salicylic acid- (SA-) induced folate accumulation by triggering uptake and accumulation of folic acid in cells. May be implicated in the transport of the folates from the site of production (leaves) to the site of storage (fruits and seeds) and utilization (roots). This Arabidopsis thaliana (Mouse-ear cress) protein is Folate-binding protein 1.